Reading from the N-terminus, the 282-residue chain is NADPH-dependent 7-cyano-7-deazaguanine reductase (282 aa).

Position 88-90 (88-90 (IES)) interacts with substrate. 90-91 (SK) is a binding site for NADPH. The active-site Thioimide intermediate is Cys-190. The Proton donor role is filled by Asp-197. 229 to 230 (HE) provides a ligand contact to substrate. Residue 258–259 (RG) coordinates NADPH.

The protein belongs to the GTP cyclohydrolase I family. QueF type 2 subfamily. As to quaternary structure, homodimer.

The protein localises to the cytoplasm. The enzyme catalyses 7-aminomethyl-7-carbaguanine + 2 NADP(+) = 7-cyano-7-deazaguanine + 2 NADPH + 3 H(+). The protein operates within tRNA modification; tRNA-queuosine biosynthesis. Functionally, catalyzes the NADPH-dependent reduction of 7-cyano-7-deazaguanine (preQ0) to 7-aminomethyl-7-deazaguanine (preQ1). This Escherichia coli O9:H4 (strain HS) protein is NADPH-dependent 7-cyano-7-deazaguanine reductase.